The primary structure comprises 75 residues: Cruzioseptin-7 (75 aa).

Residues 1–22 (MAKLKKSLFLVLFLGLVSLSIC) form the signal peptide. Residues 23-43 (EEEKREEENEEVQEDDDQSEE) constitute a propeptide that is removed on maturation. The tract at residues 25–44 (EKREEENEEVQEDDDQSEEK) is disordered. The segment covering 30-41 (ENEEVQEDDDQS) has biased composition (acidic residues).

In terms of tissue distribution, expressed by the skin glands.

It localises to the secreted. In terms of biological role, has antimicrobial activity. The protein is Cruzioseptin-7 of Cruziohyla calcarifer (Splendid leaf frog).